A 287-amino-acid chain; its full sequence is Survival motor neuron protein (287 aa).

The tract at residues 1–28 (MGGGGGGFPEPEDSVLFRRGTGESDDSD) is disordered. Residues 9–40 (PEPEDSVLFRRGTGESDDSDVWDDTALIKAYD) form a P1 (binding site for GEMIN2) region. T21 carries the phosphothreonine modification. S24 and S27 each carry phosphoserine. K47 participates in a covalent cross-link: Glycyl lysine isopeptide (Lys-Gly) (interchain with G-Cter in SUMO2). Disordered stretches follow at residues 51–86 (KNGDISEASEKPKGTPKRKSAKNKSQRKNTTSPSKQ) and 149–221 (NAQE…PPPH). A compositionally biased stretch (basic residues) spans 64 to 77 (GTPKRKSAKNKSQR). T65 bears the Phosphothreonine mark. At T80 the chain carries Phosphothreonine; by PKA. The region spanning 86 to 146 (QWKVGDNCCA…LSPTSEVANI (61 aa)) is the Tudor domain. A required for interaction with RPP20/POP7 region spans residues 92-204 (NCCAIWSEDG…MPRSGLGPGK (113 aa)). Positions 149–160 (NAQENENESQIS) are enriched in low complexity. Residues 167–179 (SSRSPLNKPNNIR) show a composition bias toward polar residues. K204 is covalently cross-linked (Glycyl lysine isopeptide (Lys-Gly) (interchain with G-Cter in SUMO2)). Positions 211–221 (GPPPPPPPPPH) are enriched in pro residues. Residues 234–261 (PPMIPPPPPICPDSLDDADALGSMLISW) are P2 (binding site for SM B). Residues 273-287 (GFKQSQKEGRYSHFN) form a required for interaction with SYNCRIP region.

The protein belongs to the SMN family. Homooligomer; may form higher order homooligomers in the dimer to octamer range. Part of the core SMN complex that contains SMN1, GEMIN2/SIP1, DDX20/GEMIN3, GEMIN4, GEMIN5, GEMIN6, GEMIN7, GEMIN8 and STRAP/UNRIP. Part of the SMN-Sm complex that contains SMN1, GEMIN2/SIP1, DDX20/GEMIN3, GEMIN4, GEMIN5, GEMIN6, GEMIN7, GEMIN8, STRAP/UNRIP and the Sm proteins SNRPB, SNRPD1, SNRPD2, SNRPD3, SNRPE, SNRPF and SNRPG. Component of an import snRNP complex composed of KPNB1, RNUT1, SMN1 and ZNF259. Interacts with DDX20, FBL, NOLA1, RNUT1, SYNCRIP and with several spliceosomal snRNP core Sm proteins, including SNRPB, SNRPD1, SNRPD2, SNRPD3, SNRPE and ILF3. Interacts with GEMIN2; the interaction is direct. Interacts with GEMIN3; the interaction is direct. Interacts with GEMIN8; the interaction is direct. Interacts with SNRPB; the interaction is direct. Interacts (via Tudor domain) with SNRPD1 (via C-terminus); the interaction is direct. Interacts with SNRPD2; the interaction is direct. Interacts (via Tudor domain) with SNRPD3 (via C-terminus); the interaction is direct. Interacts with SNRPE; the interaction is direct. Interacts with OSTF1, LSM10, LSM11 and RPP20/POP7. Interacts (via C-terminal region) with ZPR1 (via C-terminal region). Interacts (via Tudor domain) with COIL. Interacts with SETX; recruits SETX to POLR2A. Interacts with POLR2A (via the C-terminal domain (CTD)). Interacts with PRMT5. Interacts with XRN2. Interacts (via C-terminus) with FMR1 (via C-terminus); the interaction is direct and occurs in a RNA-independent manner. Interacts (via Tudor domain) with SF3B2 ('Arg-508'-methylated form). Interacts with WRAP53/TCAB1. Interacts (via Tudor domain) with ELAVL4 in an RNA-independent manner; the interaction is required for localization of ELAVL4 to RNA granules. Interacts with FRG1.

The protein resides in the nucleus. Its subcellular location is the gem. It localises to the cajal body. It is found in the cytoplasm. The protein localises to the cytoplasmic granule. The protein resides in the perikaryon. Its subcellular location is the cell projection. It localises to the neuron projection. It is found in the axon. The protein localises to the myofibril. The protein resides in the sarcomere. Its subcellular location is the z line. Its function is as follows. The SMN complex catalyzes the assembly of small nuclear ribonucleoproteins (snRNPs), the building blocks of the spliceosome, and thereby plays an important role in the splicing of cellular pre-mRNAs. Most spliceosomal snRNPs contain a common set of Sm proteins SNRPB, SNRPD1, SNRPD2, SNRPD3, SNRPE, SNRPF and SNRPG that assemble in a heptameric protein ring on the Sm site of the small nuclear RNA to form the core snRNP (Sm core). In the cytosol, the Sm proteins SNRPD1, SNRPD2, SNRPE, SNRPF and SNRPG are trapped in an inactive 6S pICln-Sm complex by the chaperone CLNS1A that controls the assembly of the core snRNP. To assemble core snRNPs, the SMN complex accepts the trapped 5Sm proteins from CLNS1A forming an intermediate. Binding of snRNA inside 5Sm ultimately triggers eviction of the SMN complex, thereby allowing binding of SNRPD3 and SNRPB to complete assembly of the core snRNP. Within the SMN complex, SMN1 acts as a structural backbone and together with GEMIN2 it gathers the Sm complex subunits. Ensures the correct splicing of U12 intron-containing genes that may be important for normal motor and proprioceptive neurons development. Also required for resolving RNA-DNA hybrids created by RNA polymerase II, that form R-loop in transcription terminal regions, an important step in proper transcription termination. May also play a role in the metabolism of small nucleolar ribonucleoprotein (snoRNPs). The polypeptide is Survival motor neuron protein (SMN1) (Bos taurus (Bovine)).